Here is a 330-residue protein sequence, read N- to C-terminus: Probable NAD(P)H-dependent D-xylose reductase xyl1 (330 aa).

Tyr-50 acts as the Proton donor in catalysis. His-112 serves as a coordination point for substrate. Residues 166 to 167 (SN), 215 to 224 (SSFGPLSFLE), and 271 to 281 (KSNNPTRLAQN) contribute to the NAD(+) site.

This sequence belongs to the aldo/keto reductase family.

The enzyme catalyses xylitol + NAD(+) = D-xylose + NADH + H(+). It catalyses the reaction xylitol + NADP(+) = D-xylose + NADPH + H(+). The protein operates within carbohydrate metabolism; D-xylose degradation. Catalyzes the initial reaction in the xylose utilization pathway by reducing D-xylose into xylitol. Xylose is a major component of hemicelluloses such as xylan. Most fungi utilize D-xylose via three enzymatic reactions, xylose reductase (XR), xylitol dehydrogenase (XDH), and xylulokinase, to form xylulose 5-phosphate, which enters pentose phosphate pathway. This is Probable NAD(P)H-dependent D-xylose reductase xyl1 (xyl1) from Aspergillus clavatus (strain ATCC 1007 / CBS 513.65 / DSM 816 / NCTC 3887 / NRRL 1 / QM 1276 / 107).